We begin with the raw amino-acid sequence, 720 residues long: Transcription factor bHLH155 (720 aa).

Residues 522 to 534 show a composition bias toward polar residues; that stretch reads YPSSSSDQFQTSL. The segment at 522 to 558 is disordered; that stretch reads YPSSSSDQFQTSLDIPKKNKKRAKPGESSRPRPRDRQ. The Nuclear localization signal motif lies at 540 to 547; sequence NKKRAKPG. The bHLH domain maps to 544–593; it reads AKPGESSRPRPRDRQLIQDRIKELRELVPNGSKCSIDSLLERTIKHMLFL. Residues 545 to 558 are compositionally biased toward basic and acidic residues; the sequence is KPGESSRPRPRDRQ.

It belongs to the bHLH protein family. LHW subfamily. As to quaternary structure, homodimer.

It localises to the nucleus. In terms of biological role, transcription factor that may regulate root development. The sequence is that of Transcription factor bHLH155 (BHLH155) from Arabidopsis thaliana (Mouse-ear cress).